The primary structure comprises 241 residues: LexA repressor (241 aa).

Residues 26–46 (FDEMKTALDLRSKSGIHRLIT) constitute a DNA-binding region (H-T-H motif). Catalysis depends on for autocatalytic cleavage activity residues Ser-162 and Lys-200.

Belongs to the peptidase S24 family. Homodimer.

It catalyses the reaction Hydrolysis of Ala-|-Gly bond in repressor LexA.. In terms of biological role, represses a number of genes involved in the response to DNA damage (SOS response), including recA and lexA. In the presence of single-stranded DNA, RecA interacts with LexA causing an autocatalytic cleavage which disrupts the DNA-binding part of LexA, leading to derepression of the SOS regulon and eventually DNA repair. The protein is LexA repressor of Ruegeria sp. (strain TM1040) (Silicibacter sp.).